Consider the following 163-residue polypeptide: SsrA-binding protein (163 aa).

It belongs to the SmpB family.

It is found in the cytoplasm. Its function is as follows. Required for rescue of stalled ribosomes mediated by trans-translation. Binds to transfer-messenger RNA (tmRNA), required for stable association of tmRNA with ribosomes. tmRNA and SmpB together mimic tRNA shape, replacing the anticodon stem-loop with SmpB. tmRNA is encoded by the ssrA gene; the 2 termini fold to resemble tRNA(Ala) and it encodes a 'tag peptide', a short internal open reading frame. During trans-translation Ala-aminoacylated tmRNA acts like a tRNA, entering the A-site of stalled ribosomes, displacing the stalled mRNA. The ribosome then switches to translate the ORF on the tmRNA; the nascent peptide is terminated with the 'tag peptide' encoded by the tmRNA and targeted for degradation. The ribosome is freed to recommence translation, which seems to be the essential function of trans-translation. In Buchnera aphidicola subsp. Schizaphis graminum (strain Sg), this protein is SsrA-binding protein.